The primary structure comprises 549 residues: Dihydroxy-acid dehydratase (549 aa).

Asp78 contacts Mg(2+). Cys119 is a [2Fe-2S] cluster binding site. 2 residues coordinate Mg(2+): Asp120 and Lys121. Lys121 carries the N6-carboxylysine modification. Cys191 is a [2Fe-2S] cluster binding site. Glu441 contributes to the Mg(2+) binding site. Ser466 (proton acceptor) is an active-site residue.

Belongs to the IlvD/Edd family. In terms of assembly, homodimer. Requires [2Fe-2S] cluster as cofactor. The cofactor is Mg(2+).

The enzyme catalyses (2R)-2,3-dihydroxy-3-methylbutanoate = 3-methyl-2-oxobutanoate + H2O. The catalysed reaction is (2R,3R)-2,3-dihydroxy-3-methylpentanoate = (S)-3-methyl-2-oxopentanoate + H2O. The protein operates within amino-acid biosynthesis; L-isoleucine biosynthesis; L-isoleucine from 2-oxobutanoate: step 3/4. It functions in the pathway amino-acid biosynthesis; L-valine biosynthesis; L-valine from pyruvate: step 3/4. Functionally, functions in the biosynthesis of branched-chain amino acids. Catalyzes the dehydration of (2R,3R)-2,3-dihydroxy-3-methylpentanoate (2,3-dihydroxy-3-methylvalerate) into 2-oxo-3-methylpentanoate (2-oxo-3-methylvalerate) and of (2R)-2,3-dihydroxy-3-methylbutanoate (2,3-dihydroxyisovalerate) into 2-oxo-3-methylbutanoate (2-oxoisovalerate), the penultimate precursor to L-isoleucine and L-valine, respectively. The polypeptide is Dihydroxy-acid dehydratase (Methanothermobacter thermautotrophicus (strain ATCC 29096 / DSM 1053 / JCM 10044 / NBRC 100330 / Delta H) (Methanobacterium thermoautotrophicum)).